Consider the following 420-residue polypeptide: UDP-N-acetylglucosamine 1-carboxyvinyltransferase (420 aa).

Residue 22-23 (KN) participates in phosphoenolpyruvate binding. Position 91 (Arg91) interacts with UDP-N-acetyl-alpha-D-glucosamine. The active-site Proton donor is Cys115. A 2-(S-cysteinyl)pyruvic acid O-phosphothioketal modification is found at Cys115. Residues 120 to 124 (RPVDL), 160 to 163 (KVSV), Asp305, and Ile327 contribute to the UDP-N-acetyl-alpha-D-glucosamine site.

Belongs to the EPSP synthase family. MurA subfamily.

Its subcellular location is the cytoplasm. The enzyme catalyses phosphoenolpyruvate + UDP-N-acetyl-alpha-D-glucosamine = UDP-N-acetyl-3-O-(1-carboxyvinyl)-alpha-D-glucosamine + phosphate. The protein operates within cell wall biogenesis; peptidoglycan biosynthesis. Cell wall formation. Adds enolpyruvyl to UDP-N-acetylglucosamine. The sequence is that of UDP-N-acetylglucosamine 1-carboxyvinyltransferase from Pectobacterium carotovorum subsp. carotovorum (strain PC1).